The chain runs to 984 residues: Mineralocorticoid receptor (984 aa).

The interval 1–602 is modulating; the sequence is METKGYHSLP…STGSSRPSKI (602 aa). Residues 231 to 243 show a composition bias toward polar residues; that stretch reads QGTPLTCSPNVEN. 2 disordered regions span residues 231–329 and 346–369; these read QGTP…AAST and SGTS…EKGA. Serine 250, serine 259, serine 283, serine 287, and serine 299 each carry phosphoserine. A compositionally biased stretch (low complexity) spans 259–291; that stretch reads SPLSSPLSSMKSSISSPPSHCSVKSPVSSPNNV. The span at 292 to 329 shows a compositional bias: polar residues; it reads TLRSSVSSPANINNSRCSVSSPSNTNNRSTLSSPAAST. Positions 346–355 are enriched in low complexity; sequence SGTSAGSSTS. Cysteine 603, cysteine 606, cysteine 620, cysteine 623, cysteine 639, cysteine 645, cysteine 655, and cysteine 658 together coordinate Zn(2+). 2 consecutive NR C4-type zinc fingers follow at residues 603-623 and 639-663; these read CLVC…CGSC and CAGR…LQKC. The segment at residues 603–668 is a DNA-binding region (nuclear receptor); sequence CLVCGDEASG…RLQKCLQAGM (66 aa). A hinge region spans residues 669-725; it reads NLGARKSKKLGKLKGIHEEQPQQQQPPPPPPPPQSPEEGTTYIAPAKEPSVNTALVP. The interval 684–710 is disordered; that stretch reads IHEEQPQQQQPPPPPPPPQSPEEGTTY. The segment covering 692-703 has biased composition (pro residues); that stretch reads QQPPPPPPPPQS. An NR LBD domain is found at 726 to 964; that stretch reads QLSTISRALT…EFPAMLVEII (239 aa). Positions 770 and 776 each coordinate 21-hydroxyprogesterone. Positions 770 and 776 each coordinate aldosterone. The progesterone site is built by asparagine 770 and glutamine 776. Residues 782–785 form an important for coactivator binding region; it reads KWAK. 21-hydroxyprogesterone-binding residues include arginine 817 and threonine 945. Arginine 817 and threonine 945 together coordinate aldosterone. Progesterone contacts are provided by arginine 817 and threonine 945.

Belongs to the nuclear hormone receptor family. NR3 subfamily. As to quaternary structure, heteromultimeric cytoplasmic complex with HSP90, HSP70, and FKBP4, in the absence of ligand. After ligand binding, it translocates to the nucleus and binds to DNA as a homodimer and as a heterodimer with NR3C1. Binds the coactivator NCOA2. May interact with HSD11B2 in the absence of ligand. Binds the coactivators NCOA1, TIF1 and NRIP1. Phosphorylated.

It localises to the cytoplasm. The protein localises to the nucleus. It is found in the endoplasmic reticulum membrane. In terms of biological role, receptor for both mineralocorticoids (MC) such as aldosterone and glucocorticoids (GC) such as corticosterone or cortisol. Binds to mineralocorticoid response elements (MRE) and transactivates target genes. The effect of MC is to increase ion and water transport and thus raise extracellular fluid volume and blood pressure and lower potassium levels. The sequence is that of Mineralocorticoid receptor (NR3C2) from Aotus nancymaae (Ma's night monkey).